Reading from the N-terminus, the 149-residue chain is MNKMTNNKTIWMKPRYVKKKWYVIDASDKVLGRIATEAVKILRGKHKPYYTPHQDLGDNVVIINASKVKLTGKKYFQKIYYRHSRYPGGLYSDTYRTLSERKPTAPLEIAIKGMLPKGPLGRELFRNLKVFADANHKLSSQNLYKLEAN.

This sequence belongs to the universal ribosomal protein uL13 family. In terms of assembly, part of the 50S ribosomal subunit.

This protein is one of the early assembly proteins of the 50S ribosomal subunit, although it is not seen to bind rRNA by itself. It is important during the early stages of 50S assembly. The protein is Large ribosomal subunit protein uL13 of Borrelia duttonii (strain Ly).